We begin with the raw amino-acid sequence, 450 residues long: Probable ECA polymerase (450 aa).

The next 11 helical transmembrane spans lie at 6–26 (FSGLFVVWLLCTLFIATLTWF), 37–57 (VFFSLLFLLTFFFGFPLTSVL), 63–83 (VGVAPPEILLQALLSAGCFYA), 118–138 (VILMGIALVSVGIFFMHNGFL), 155–175 (GVALKRFFYFFIPAMLVVYFL), 181–201 (AWLFFLVSTVAFGLLTYMIVG), 207–227 (IIIAFAIFLFIGIIRGWISLW), 228–248 (MLAAAGVLGIVGMFWLALKRY), 341–361 (LVVMGGALFIPLGAIVVGLII), 378–398 (YKAAILHSFCFGAIFNMIVLA), and 410–430 (VFFIVVFGACLMIAKLLYWLF).

It belongs to the WzyE family. As to quaternary structure, probably part of a complex composed of WzxE, WzyE and WzzE.

It is found in the cell inner membrane. Its pathway is bacterial outer membrane biogenesis; enterobacterial common antigen biosynthesis. Probably involved in the polymerization of enterobacterial common antigen (ECA) trisaccharide repeat units. The protein is Probable ECA polymerase of Shigella sonnei (strain Ss046).